The chain runs to 190 residues: Small ribosomal subunit protein uS4 (190 aa).

The region spanning R106–A178 is the S4 RNA-binding domain. Residues G166 to E190 are disordered. Over residues G169–A179 the composition is skewed to basic residues.

The protein belongs to the universal ribosomal protein uS4 family.

The polypeptide is Small ribosomal subunit protein uS4 (Trypanosoma brucei brucei).